A 395-amino-acid polypeptide reads, in one-letter code: 1-deoxy-D-xylulose 5-phosphate reductoisomerase (395 aa).

NADPH-binding residues include Thr-13, Gly-14, Ser-15, Ile-16, Lys-40, and Asn-127. Lys-128 serves as a coordination point for 1-deoxy-D-xylulose 5-phosphate. Glu-129 contributes to the NADPH binding site. Position 153 (Asp-153) interacts with Mn(2+). 1-deoxy-D-xylulose 5-phosphate-binding residues include Ser-154, Glu-155, Ser-184, and His-207. Residue Glu-155 participates in Mn(2+) binding. Gly-213 is an NADPH binding site. 1-deoxy-D-xylulose 5-phosphate is bound by residues Ser-220, Asn-225, Lys-226, and Glu-229. A Mn(2+)-binding site is contributed by Glu-229.

This sequence belongs to the DXR family. The cofactor is Mg(2+). Mn(2+) is required as a cofactor.

The catalysed reaction is 2-C-methyl-D-erythritol 4-phosphate + NADP(+) = 1-deoxy-D-xylulose 5-phosphate + NADPH + H(+). It participates in isoprenoid biosynthesis; isopentenyl diphosphate biosynthesis via DXP pathway; isopentenyl diphosphate from 1-deoxy-D-xylulose 5-phosphate: step 1/6. Functionally, catalyzes the NADPH-dependent rearrangement and reduction of 1-deoxy-D-xylulose-5-phosphate (DXP) to 2-C-methyl-D-erythritol 4-phosphate (MEP). The protein is 1-deoxy-D-xylulose 5-phosphate reductoisomerase of Nitrosospira multiformis (strain ATCC 25196 / NCIMB 11849 / C 71).